The following is a 748-amino-acid chain: Cytosolic phospholipase A2 (748 aa).

The segment at Met-1–Ser-178 is phospholipid binding. The 119-residue stretch at Pro-6 to Phe-124 folds into the C2 domain. The Ca(2+) site is built by Asp-40, Thr-41, Asp-43, Asn-65, Asp-93, Ala-94, and Asn-95. The PLA2c domain occupies Val-138–Asn-740. The active-site Nucleophile is the Ser-228. Residues Ser-431–Ser-459 form a disordered region. Residues Asn-449–Ser-459 are compositionally biased toward polar residues. A Phosphoserine; by MAPK modification is found at Ser-505. Residue Asp-549 is the Proton acceptor of the active site.

In terms of processing, activated by phosphorylation on a serine residue.

Its subcellular location is the cytoplasm. The protein resides in the cytoplasmic vesicle. The catalysed reaction is a 1,2-diacyl-sn-glycero-3-phosphocholine + H2O = a 1-acyl-sn-glycero-3-phosphocholine + a fatty acid + H(+). It catalyses the reaction a 1-acyl-sn-glycero-3-phosphocholine + H2O = sn-glycerol 3-phosphocholine + a fatty acid + H(+). With respect to regulation, stimulated by agonists such as ATP, EGF, thrombin and bradykinin as well as by cytosolic Ca(2+). Its function is as follows. Selectively hydrolyzes arachidonyl phospholipids in the sn-2 position releasing arachidonic acid. Together with its lysophospholipid activity, it is implicated in the initiation of the inflammatory response. This chain is Cytosolic phospholipase A2 (PLA2G4A), found in Gallus gallus (Chicken).